Consider the following 931-residue polypeptide: ATP-dependent RNA helicase DBP10 (931 aa).

The tract at residues 1 to 78 (MSDNEEDYDI…LSGDEDEQDD (78 aa)) is disordered. Over residues 19-47 (EDSDSDSGSDFSDEEQEVQDIISSEDEAE) the composition is skewed to acidic residues. A Q motif motif is present at residues 99–127 (GSFQSFGLSKLVLTNIAKKGYRQPTPIQR). Positions 130-302 (IPLIMANRDV…KAGLSNPVLV (173 aa)) constitute a Helicase ATP-binding domain. 143–150 (ARTGSGKT) contributes to the ATP binding site. Residues 250–253 (DEAD) carry the DEAD box motif. The Helicase C-terminal domain maps to 372 to 532 (GSKRKYKFKK…EQKCQLLKDK (161 aa)). Positions 836-910 (RNMQPAKVGS…SEIKSTEDIR (75 aa)) are disordered. 2 stretches are compositionally biased toward basic and acidic residues: residues 866–875 (LPDKYRDDYH) and 882–910 (EKAV…EDIR).

This sequence belongs to the DEAD box helicase family. DDX54/DBP10 subfamily.

It localises to the nucleus. The protein localises to the nucleolus. It catalyses the reaction ATP + H2O = ADP + phosphate + H(+). Its function is as follows. ATP-binding RNA helicase involved in the biogenesis of 60S ribosomal subunits and is required for the normal formation of 25S and 5.8S rRNAs. This Scheffersomyces stipitis (strain ATCC 58785 / CBS 6054 / NBRC 10063 / NRRL Y-11545) (Yeast) protein is ATP-dependent RNA helicase DBP10 (DBP10).